Consider the following 524-residue polypeptide: Na(+)/H(+) antiporter NhaB (524 aa).

A run of 9 helical transmembrane segments spans residues 13-33, 98-118, 140-160, 239-259, 304-324, 325-345, 358-378, 448-468, and 479-499; these read FLGN…IINP, LLLV…LFVF, AFLS…SVSV, FFIR…LVCL, AIIG…VGLV, GLSV…HSLG, LTVF…TPII, ATPN…APLI, and ALPY…FLLV.

This sequence belongs to the NhaB Na(+)/H(+) (TC 2.A.34) antiporter family.

The protein localises to the cell inner membrane. The catalysed reaction is 2 Na(+)(in) + 3 H(+)(out) = 2 Na(+)(out) + 3 H(+)(in). Functionally, na(+)/H(+) antiporter that extrudes sodium in exchange for external protons. This chain is Na(+)/H(+) antiporter NhaB, found in Yersinia pseudotuberculosis serotype O:3 (strain YPIII).